Consider the following 894-residue polypeptide: CWF19-like protein 2 (894 aa).

A disordered region spans residues 1–147 (MATSMAAASG…DEKSGKDDTQ (147 aa)). Over residues 13-56 (ESAKSIEERKEQTRNARAEVLRQAKANFEKEERRKELKRLRGED) the composition is skewed to basic and acidic residues. A coiled-coil region spans residues 13 to 107 (ESAKSIEERK…KKQKYEKNNE (95 aa)). S75 is modified (phosphoserine). Over residues 76–99 (VKKKKKKDKHSKKAKKEKKKKSKK) the composition is skewed to basic residues. Residues 128–147 (PDKEKAWKVKDEKSGKDDTQ) show a composition bias toward basic and acidic residues. Residues 166–281 (SSSSLKAEKE…AEKAASTKED (116 aa)) adopt a coiled-coil conformation. A Glycyl lysine isopeptide (Lys-Gly) (interchain with G-Cter in SUMO2) cross-link involves residue K171. Residues 270-284 (EDAEKAASTKEDYRR) show a composition bias toward basic and acidic residues. Positions 270–483 (EDAEKAASTK…STFAGSPERE (214 aa)) are disordered. Residues 320–330 (TTDTAKNSNNE) are compositionally biased toward polar residues. Over residues 332 to 352 (FIGDEKDKRPGSLETCRRESN) the composition is skewed to basic and acidic residues. 2 positions are modified to phosphoserine: S360 and S372. Composition is skewed to basic and acidic residues over residues 410-430 (KNSEERLTSWSRSDGRGDKKH) and 440-473 (TDEHQHVPEDPREKSQDEVLRDDPPKKEHLRDTK). 2 positions are modified to phosphoserine: S479 and S484. Residues 502-530 (KAEMMGNMELAEQLKVQLEKANKFKETIT) adopt a coiled-coil conformation. The tract at residues 561–583 (NTPGKSLESQGGRRKRQMVSTHE) is disordered. K604 is covalently cross-linked (Glycyl lysine isopeptide (Lys-Gly) (interchain with G-Cter in SUMO2)). Residues 644-675 (AAERERLGEEEENQRKKAIAEHRSLAAQMEKC) adopt a coiled-coil conformation.

It belongs to the CWF19 family.

In Homo sapiens (Human), this protein is CWF19-like protein 2 (CWF19L2).